The sequence spans 861 residues: DNA primase (861 aa).

Residues cysteine 805–cysteine 843 form a CHC2-type zinc finger.

Belongs to the herpesviridae DNA primase family. Associates with the helicase and the primase-associated factor to form the helicase-primase factor.

The protein localises to the host nucleus. Its function is as follows. Essential component of the helicase/primase complex. Unwinds the DNA at the replication forks and generates single-stranded DNA for both leading and lagging strand synthesis. The primase initiates primer synthesis and thereby produces large amount of short RNA primers on the lagging strand that the polymerase elongates using dNTPs. The polypeptide is DNA primase (U43) (Human herpesvirus 7 (strain JI) (HHV-7)).